The primary structure comprises 237 residues: Synapse differentiation-inducing gene protein 1-like (237 aa).

3 disordered regions span residues 1–23, 84–111, and 127–148; these read MESLSELQNPLLPRSPTHLHRPY, AGSCETSFTEAREPLAGPAEEGSEPGQA, and ELQGQEDSQEEESDGTSSESEC. Topologically, residues 1 to 161 are extracellular; it reads MESLSELQNP…FLTLPPRDHL (161 aa). Residues 129-148 show a composition bias toward acidic residues; it reads QGQEDSQEEESDGTSSESEC. Residues 162–182 traverse the membrane as a helical segment; it reads GLTLFSMLCCFWPLGIAAFYF. The Cytoplasmic segment spans residues 183–204; the sequence is SQGTSKAISKGDFRLASTTSRR. Residues 205-225 traverse the membrane as a helical segment; it reads ALFLATLSIAVGAGLYVAVVV. The Extracellular portion of the chain corresponds to 226–237; that stretch reads ALAAYMSQNGHG.

The protein belongs to the CD225/Dispanin family. Expression is restricted to the caudate-putamen. Down-regulated in R6/2 transgenic mice, a model for Huntington disease.

Its subcellular location is the membrane. The protein localises to the golgi apparatus. It localises to the cis-Golgi network. The sequence is that of Synapse differentiation-inducing gene protein 1-like (Syndig1l) from Mus musculus (Mouse).